We begin with the raw amino-acid sequence, 224 residues long: Small ribosomal subunit protein uS3 (224 aa).

The 69-residue stretch at 38–106 (LREYVKEKLG…EVYLNVVEVR (69 aa)) folds into the KH type-2 domain.

The protein belongs to the universal ribosomal protein uS3 family. In terms of assembly, part of the 30S ribosomal subunit. Forms a tight complex with proteins S10 and S14.

Its function is as follows. Binds the lower part of the 30S subunit head. Binds mRNA in the 70S ribosome, positioning it for translation. The chain is Small ribosomal subunit protein uS3 from Anaeromyxobacter sp. (strain Fw109-5).